Consider the following 556-residue polypeptide: Glucose-6-phosphate isomerase (556 aa).

The Proton donor role is filled by Glu363. Catalysis depends on residues His394 and Lys522.

It belongs to the GPI family.

It is found in the cytoplasm. The catalysed reaction is alpha-D-glucose 6-phosphate = beta-D-fructose 6-phosphate. Its pathway is carbohydrate biosynthesis; gluconeogenesis. It participates in carbohydrate degradation; glycolysis; D-glyceraldehyde 3-phosphate and glycerone phosphate from D-glucose: step 2/4. Its function is as follows. Catalyzes the reversible isomerization of glucose-6-phosphate to fructose-6-phosphate. In Frankia casuarinae (strain DSM 45818 / CECT 9043 / HFP020203 / CcI3), this protein is Glucose-6-phosphate isomerase.